A 421-amino-acid chain; its full sequence is Enolase (421 aa).

Residue Gln165 participates in (2R)-2-phosphoglycerate binding. The Proton donor role is filled by Glu207. Mg(2+) is bound by residues Asp244, Glu285, and Asp312. (2R)-2-phosphoglycerate-binding residues include Lys337, Arg366, Ser367, and Lys388. Residue Lys337 is the Proton acceptor of the active site.

Belongs to the enolase family. The cofactor is Mg(2+).

It localises to the cytoplasm. The protein localises to the secreted. The protein resides in the cell surface. It catalyses the reaction (2R)-2-phosphoglycerate = phosphoenolpyruvate + H2O. Its pathway is carbohydrate degradation; glycolysis; pyruvate from D-glyceraldehyde 3-phosphate: step 4/5. Functionally, catalyzes the reversible conversion of 2-phosphoglycerate (2-PG) into phosphoenolpyruvate (PEP). It is essential for the degradation of carbohydrates via glycolysis. In Ehrlichia chaffeensis (strain ATCC CRL-10679 / Arkansas), this protein is Enolase.